The sequence spans 841 residues: Translation initiation factor IF-2 (841 aa).

The segment at 87–254 (RKKKVFVQRS…KRNAHGFQSP (168 aa)) is disordered. The segment covering 96–135 (SPEEIEAERKREMDERRAVENAARQKAEEEAKRRAEEDAR) has biased composition (basic and acidic residues). The span at 136 to 175 (SQPAASQSAPAAAEPVAAAEPVREAAPAAAPAPASAAPSA) shows a compositional bias: low complexity. Basic and acidic residues-rich tracts occupy residues 176-217 (DARK…EKAP) and 225-234 (TTDEESDSFR). Residues 235–248 (RGGRGKGKLKKRNA) are compositionally biased toward basic residues. A tr-type G domain is found at 341-510 (SRAPVVTVMG…LLQAEVLELK (170 aa)). The interval 350-357 (GHVDHGKT) is G1. 350–357 (GHVDHGKT) provides a ligand contact to GTP. Positions 375 to 379 (GITQH) are G2. A G3 region spans residues 396 to 399 (DTPG). GTP contacts are provided by residues 396–400 (DTPGH) and 450–453 (NKID). Residues 450–453 (NKID) are G4. The segment at 486-488 (SAK) is G5.

It belongs to the TRAFAC class translation factor GTPase superfamily. Classic translation factor GTPase family. IF-2 subfamily.

The protein localises to the cytoplasm. One of the essential components for the initiation of protein synthesis. Protects formylmethionyl-tRNA from spontaneous hydrolysis and promotes its binding to the 30S ribosomal subunits. Also involved in the hydrolysis of GTP during the formation of the 70S ribosomal complex. The protein is Translation initiation factor IF-2 of Pseudomonas syringae pv. syringae (strain B728a).